The following is a 676-amino-acid chain: Envelope glycoprotein (676 aa).

The N-terminal stretch at 1 to 32 (MGASGILQLPRERFRKTSFFVWVIILFHKVFS) is a signal peptide. Residues 33–650 (IPLGVVHNNT…GSNWWTGWKQ (618 aa)) lie on the Extracellular side of the membrane. Residue Asn40 is glycosylated (N-linked (GlcNAc...) asparagine; by host). Intrachain disulfides connect Cys53–Cys609, Cys108–Cys135, Cys121–Cys147, Cys511–Cys556, and Cys601–Cys608. The receptor-binding stretch occupies residues 54 to 201 (RDKLSSTSQL…DFFQSPPLHE (148 aa)). N-linked (GlcNAc...) asparagine; by host glycans are attached at residues Asn204, Asn228, Asn257, Asn268, and Asn296. Residues 305 to 485 (ELSFVPVPET…LSGPGFLTNT (181 aa)) form a mucin-like region region. Positions 356 to 463 (IKGKDTMPTT…PTTLPEQHTA (108 aa)) are disordered. Positions 361-374 (TMPTTVTGVPTTTP) are enriched in low complexity. A compositionally biased stretch (polar residues) spans 402–422 (TTQPAKTTSQPTNSTESTTLN). An N-linked (GlcNAc...) asparagine; by host glycan is attached at Asn414. A compositionally biased stretch (low complexity) spans 423 to 440 (PTSEPSSRGTGPSSPTVP). Asn441 is a glycosylation site (N-linked (GlcNAc...) asparagine; by host). The span at 452-463 (TTPTTLPEQHTA) shows a compositional bias: polar residues. Positions 524–539 (GAAIGLAWIPYFGPAA) are fusion peptide. Residues 554 to 595 (LICGLRQLANETTQALQLFLRATTELRTFSILNRKAIDFLLQ) are a coiled coil. A glycan (N-linked (GlcNAc...) asparagine; by host) is linked at Asn563. Residues 615–634 (WTKNITDKIDQIIHDFVDNN) adopt a coiled-coil conformation. An N-linked (GlcNAc...) asparagine; by host glycan is attached at Asn618. The helical transmembrane segment at 651 to 671 (WVPAGIGITGVIIAIIALLCI) threads the bilayer. S-palmitoyl cysteine; by host attachment occurs at residues Cys670 and Cys672. Residues 672–676 (CKFML) lie on the Cytoplasmic side of the membrane.

Belongs to the filoviruses glycoprotein family. In terms of assembly, homotrimer; each monomer consists of a GP1 and a GP2 subunit linked by disulfide bonds. The resulting peplomers (GP1,2) protrude from the virus surface as spikes. GP1 and GP2delta are part of GP1,2delta soluble complexes released by ectodomain shedding. GP1,2 interacts with host integrin ITGAV/alpha-V and CLEC10A. Also binds human CD209 and CLEC4M (collectively referred to as DC-SIGN(R)), as well as human FOLR1. Interacts with host entry receptor NPC1. Post-translationally, the signal peptide region modulates GP's high mannose glycosylation, thereby determining the efficiency of the interactions with DC-SIGN(R). In terms of processing, N-glycosylated. O-glycosylated in the mucin-like region. Post-translationally, palmitoylation of GP2 is not required for its function. In terms of processing, specific enzymatic cleavages in vivo yield mature proteins. The precursor is processed into GP1 and GP2 by host cell furin in the trans Golgi, and maybe by other host proteases, to yield the mature GP1 and GP2 proteins. The cleavage site corresponds to the furin optimal cleavage sequence [KR]-X-[KR]-R. This cleavage does not seem to be required for function. After the internalization of the virus into cell endosomes, GP1 C-terminus is removed by the endosomal proteases cathepsin B, cathepsin L, or both, leaving a 19-kDa N-terminal fragment which is further digested by cathepsin B. Proteolytic processing of GP1,2 by host ADAM17 can remove the transmembrane anchor of GP2 and leads to shedding of complexes consisting in GP1 and truncated GP2 (GP1,2delta).

It is found in the virion membrane. It localises to the host cell membrane. Its subcellular location is the secreted. Functionally, GP1 is responsible for binding to the receptor(s) on target cells. Interacts with CD209/DC-SIGN and CLEC4M/DC-SIGNR which act as cofactors for virus entry into the host cell. Binding to CD209 and CLEC4M, which are respectively found on dendritic cells (DCs), and on endothelial cells of liver sinusoids and lymph node sinuses, facilitate infection of macrophages and endothelial cells. These interactions not only facilitate virus cell entry, but also allow capture of viral particles by DCs and subsequent transmission to susceptible cells without DCs infection (trans infection). Binding to the macrophage specific lectin CLEC10A also seems to enhance virus infectivity. Interaction with FOLR1/folate receptor alpha may be a cofactor for virus entry in some cell types, although results are contradictory. Members of the Tyro3 receptor tyrosine kinase family also seem to be cell entry factors in filovirus infection. Once attached, the virions are internalized through clathrin-dependent endocytosis and/or macropinocytosis. After internalization of the virus into the endosomes of the host cell, proteolysis of GP1 by two cysteine proteases, CTSB/cathepsin B and CTSL/cathepsin L presumably induces a conformational change of GP2, unmasking its fusion peptide and initiating membranes fusion. In terms of biological role, GP2 acts as a class I viral fusion protein. Under the current model, the protein has at least 3 conformational states: pre-fusion native state, pre-hairpin intermediate state, and post-fusion hairpin state. During viral and target cell membrane fusion, the coiled coil regions (heptad repeats) assume a trimer-of-hairpins structure, positioning the fusion peptide in close proximity to the C-terminal region of the ectodomain. The formation of this structure appears to drive apposition and subsequent fusion of viral and target cell membranes. Responsible for penetration of the virus into the cell cytoplasm by mediating the fusion of the membrane of the endocytosed virus particle with the endosomal membrane. Low pH in endosomes induces an irreversible conformational change in GP2, releasing the fusion hydrophobic peptide. Its function is as follows. GP1,2 which is the disulfid-linked complex of GP1 and GP2, mediates endothelial cell activation and decreases endothelial barrier function. Mediates activation of primary macrophages. At terminal stages of the viral infection, when its expression is high, GP1,2 down-modulates the expression of various host cell surface molecules that are essential for immune surveillance and cell adhesion. Down-modulates integrins ITGA1, ITGA2, ITGA3, ITGA4, ITGA5, ITGA6, ITGAV and ITGB1. GP1,2 alters the cellular recycling of the dimer alpha-V/beta-3 via a dynamin-dependent pathway. Decrease in the host cell surface expression of various adhesion molecules may lead to cell detachment, contributing to the disruption of blood vessel integrity and hemorrhages developed during Ebola virus infection (cytotoxicity). This cytotoxicity appears late in the infection, only after the massive release of viral particles by infected cells. Down-modulation of host MHC-I, leading to altered recognition by immune cells, may explain the immune suppression and inflammatory dysfunction linked to Ebola infection. Also down-modulates EGFR surface expression. Counteracts the antiviral effect of host tetherin. GP2delta is part of the complex GP1,2delta released by host ADAM17 metalloprotease. This secreted complex may play a role in the pathogenesis of the virus by efficiently blocking the neutralizing antibodies that would otherwise neutralize the virus surface glycoproteins GP1,2. Might therefore contribute to the lack of inflammatory reaction seen during infection in spite the of extensive necrosis and massive virus production. GP1,2delta does not seem to be involved in activation of primary macrophages. The protein is Envelope glycoprotein (GP) of Tai Forest ebolavirus (strain Cote d'Ivoire-94) (TAFV).